A 503-amino-acid chain; its full sequence is Glutamate/gamma-aminobutyrate antiporter (503 aa).

33-43 provides a ligand contact to L-glutamate; sequence LHLVFFLLLGG. 7 helical membrane-spanning segments follow: residues 35-55, 153-173, 194-214, 232-252, 366-386, 407-427, and 440-460; these read LVFF…LCAA, FVVG…AYFI, VSTL…EASA, ILLV…VAAV, LTVV…FVLI, IIAG…FVPP, and MILL…YELH.

The protein belongs to the amino acid-polyamine-organocation (APC) superfamily. Glutamate:GABA antiporter (GGA) (TC 2.A.3.7) family.

Its subcellular location is the cell membrane. It catalyses the reaction 4-aminobutanoate(in) + L-glutamate(out) = 4-aminobutanoate(out) + L-glutamate(in). Its function is as follows. Involved in glutaminase-dependent acid resistance. Exchanges extracellular glutamate (Glu) for intracellular gamma-aminobutyric acid (GABA) under acidic conditions. The polypeptide is Glutamate/gamma-aminobutyrate antiporter (gadC) (Lactococcus lactis subsp. lactis (strain IL1403) (Streptococcus lactis)).